The chain runs to 560 residues: MEYGKCRGIERGMGRRDFLKAATLLGATAAGAGMLAGCAPKSASEAQAQTAPAATGGLDPADVDWKYETDVVIVGSGSGGTCAAIEAAEAGADVVVFEKDKAMYGGNSALCGGYMLAAGWSTQEEITGYAGDTGEAFANQMLRWSQGLGNQDMIREACLRSGEAVDWMMDTGRTYEGASPLPPVWSCGDTEADVVPRSVYNHNAYGATEGHMATLKKRAESLSNIEIEMGCEVAHILKNAEGSVIGVQLADGSFAKARKGVVMACASVDNNLEMSKDLGLMQNVWGLTLEGAGLLAPGNPDMDSNTGDGVRMLREIGAELCMQQAVCMNDSIYVGGISDWGMSEILGKDVNIHDSSNIDAILVDKTGRRFCQDDAEWGYVMHECAQAAWKQGFTPDDPTTGYIFYVYDATGAPFFEMKGHTPDTCDTTFSADSVDGLAEFIGCDPTALASEVERWNSFCEAGLDADFGRRANMAPIATPPFYCDVVRPGPMGTFAGAKSNVEAEIIGLDGNPIPRLYGAGCIIGGNVSGAFYFGCGWSITNTVVWGREAGRNVAALEPWE.

The tat-type signal signal peptide spans 1–48 (MEYGKCRGIERGMGRRDFLKAATLLGATAAGAGMLAGCAPKSASEAQA).

Belongs to the FAD-dependent oxidoreductase 2 family. As to quaternary structure, may form a membrane-associated complex with Cgr1. It depends on FAD as a cofactor. [4Fe-4S] cluster serves as cofactor. In terms of processing, predicted to be exported by the Tat system. The position of the signal peptide cleavage has not been experimentally proven.

The protein localises to the cell membrane. It catalyses the reaction digoxin + 2 Fe(II)-[cytochrome c] + 3 H(+) = dihydrodigoxin + 2 Fe(III)-[cytochrome c]. The enzyme catalyses digitoxin + 2 Fe(II)-[cytochrome c] + 3 H(+) = dihydrodigitoxin + 2 Fe(III)-[cytochrome c]. It carries out the reaction digoxigenin + 2 Fe(II)-[cytochrome c] + 3 H(+) = dihydrodigoxigenin + 2 Fe(III)-[cytochrome c]. The catalysed reaction is ouabain + 2 Fe(II)-[cytochrome c] + 3 H(+) = dihydroouabain + 2 Fe(III)-[cytochrome c]. It catalyses the reaction ouabagenin + 2 Fe(II)-[cytochrome c] + 3 H(+) = dihydroouabagenin + 2 Fe(III)-[cytochrome c]. Its function is as follows. Involved in the inactivation of the cardiac medication and plant natural product digoxin, thus decreasing drug efficacy and toxicity. Catalyzes the reduction of the alpha,beta-unsaturated butyrolactone ring of digoxin to the inactive metabolite dihydrodigoxin. Likely uses the cytochrome Cgr1 as the physiological electron donor, encoded by the adjacent gene in the locus. Only reduces digoxin and other cardenolide toxins, such as digitoxin, digoxigenin, ouabain and ouabagenin. Therefore is a specialized enzyme present in some gut bacteria E.lenta that protects their human host against ingested plant toxins. This is Digoxin reductase from Eggerthella lenta (strain ATCC 25559 / DSM 2243 / CCUG 17323 / JCM 9979 / KCTC 3265 / NCTC 11813 / VPI 0255 / 1899 B) (Eubacterium lentum).